The primary structure comprises 242 residues: Cytochrome c oxidase subunit 2 (242 aa).

Residues 1–30 (MSFYGSRYFGDIVHGELGKDLFRYHGFVMM) are Mitochondrial intermembrane-facing. The helical transmembrane segment at 31-47 (VAVAVLVFVMYMGCVIL) threads the bilayer. Over 48 to 66 (FTKFSYRHFLNRQRLEFWW) the chain is Mitochondrial matrix. The chain crosses the membrane as a helical span at residues 67–83 (TIVPMLMLVGLWXPSMI). At 84 to 242 (NLYYMEEVKR…YFVMWLEALN (159 aa)) the chain is on the mitochondrial intermembrane side. Cu cation-binding residues include His176, Cys211, Glu213, Cys215, His219, and Met222. Glu213 serves as a coordination point for Mg(2+).

This sequence belongs to the cytochrome c oxidase subunit 2 family. In terms of assembly, component of the cytochrome c oxidase (complex IV, CIV), a multisubunit enzyme composed of a catalytic core of 3 subunits and several supernumerary subunits. The complex exists as a monomer or a dimer and forms supercomplexes (SCs) in the inner mitochondrial membrane with ubiquinol-cytochrome c oxidoreductase (cytochrome b-c1 complex, complex III, CIII). Cu cation serves as cofactor.

Its subcellular location is the mitochondrion inner membrane. The catalysed reaction is 4 Fe(II)-[cytochrome c] + O2 + 8 H(+)(in) = 4 Fe(III)-[cytochrome c] + 2 H2O + 4 H(+)(out). In terms of biological role, component of the cytochrome c oxidase, the last enzyme in the mitochondrial electron transport chain which drives oxidative phosphorylation. The respiratory chain contains 3 multisubunit complexes succinate dehydrogenase (complex II, CII), ubiquinol-cytochrome c oxidoreductase (cytochrome b-c1 complex, complex III, CIII) and cytochrome c oxidase (complex IV, CIV), that cooperate to transfer electrons derived from NADH and succinate to molecular oxygen, creating an electrochemical gradient over the inner membrane that drives transmembrane transport and the ATP synthase. Cytochrome c oxidase is the component of the respiratory chain that catalyzes the reduction of oxygen to water. Electrons originating from reduced cytochrome c in the intermembrane space (IMS) are transferred via the dinuclear copper A center (CU(A)) of subunit 2 and heme A of subunit 1 to the active site in subunit 1, a binuclear center (BNC) formed by heme A3 and copper B (CU(B)). The BNC reduces molecular oxygen to 2 water molecules using 4 electrons from cytochrome c in the IMS and 4 protons from the mitochondrial matrix. The sequence is that of Cytochrome c oxidase subunit 2 (COII) from Mytilus edulis (Blue mussel).